A 246-amino-acid polypeptide reads, in one-letter code: UL16-binding protein 6 (246 aa).

The signal sequence occupies residues 1–25; it reads MAAAAIPALLLCLPLLFLLFGWSRA. Residues 29 to 117 form an MHC class I alpha-1 like region; sequence DPHSLCYDIT…IQLENYTPKE (89 aa). A disulfide bond links cysteine 50 and cysteine 66. N-linked (GlcNAc...) asparagine glycans are attached at residues asparagine 68 and asparagine 82. The tract at residues 118-210 is MHC class I alpha-2 like; it reads PLTLQARMSC…MDSTLEPSAG (93 aa). Cysteine 127 and cysteine 190 are joined by a disulfide. A lipid anchor (GPI-anchor amidated glycine) is attached at glycine 218. The propeptide at 219–246 is removed in mature form; the sequence is TTQLRATATTLILCCLLIILPCFILPGI.

Belongs to the MHC class I family. Interacts with KLRK1/NKG2D. As to quaternary structure, (Microbial infection) In CMV-infected cells, interacts with the viral glycoprotein UL16; this interaction causes relocalization from the cell surface to the cytoplasm and prevents binding to and activation of KLRK1/NKG2D, providing CMV with an immune evasion mechanism. As to expression, widely expressed. Expressed in trachea. Constitutively expressed in peripheral blood mononuclear cells, including B-cells and natural killer cells, as well as CD4+ and CD8+ T-cells and monocytes. Tends to be up-regulated in various lymphoid malignancies, including chronic lymphocytic leukemia.

The protein localises to the cell membrane. It is found in the endoplasmic reticulum. Functionally, binds and activates the KLRK1/NKG2D receptor, mediating natural killer cell cytotoxicity. The polypeptide is UL16-binding protein 6 (RAET1L) (Homo sapiens (Human)).